A 245-amino-acid chain; its full sequence is 8-amino-3,8-dideoxy-manno-octulosonate cytidylyltransferase (245 aa).

It belongs to the KdsB family.

The protein resides in the cytoplasm. It carries out the reaction 8-amino-3,8-dideoxy-alpha-D-manno-octulosonate + CTP = CMP-8-amino-3,8-dideoxy-alpha-D-manno-oct-2-ulosonate + diphosphate. The protein operates within bacterial outer membrane biogenesis; lipopolysaccharide biosynthesis. Functionally, activates KDO8N (a required 8-carbon sugar) for incorporation into bacterial lipopolysaccharide in the Shewanella genus. This chain is 8-amino-3,8-dideoxy-manno-octulosonate cytidylyltransferase, found in Shewanella loihica (strain ATCC BAA-1088 / PV-4).